The sequence spans 140 residues: Acyl-coenzyme A thioesterase 13 (140 aa).

Met1 is subject to N-acetylmethionine. N6-acetyllysine is present on residues Lys27, Lys37, and Lys43. Glu46 is a binding site for CoA. Residues Asn50 and Gly81 each contribute to the substrate site. Residues Ser83, 90 to 95 (YMSPAK), and 108 to 113 (KQGKTL) each bind CoA. N6-acetyllysine is present on residues Lys108 and Lys127. A CoA-binding site is contributed by His137.

The protein belongs to the thioesterase PaaI family. As to quaternary structure, homotetramer. Interacts with PCTP. As to expression, highly expressed in the kidney and moderately in the heart, liver, brain, small and large intestine. Also expressed in brown adipose tissue.

It localises to the cytoplasm. The protein resides in the cytosol. The protein localises to the mitochondrion. It is found in the nucleus. Its subcellular location is the cytoskeleton. It localises to the spindle. The enzyme catalyses a fatty acyl-CoA + H2O = a fatty acid + CoA + H(+). It catalyses the reaction decanoyl-CoA + H2O = decanoate + CoA + H(+). It carries out the reaction octanoyl-CoA + H2O = octanoate + CoA + H(+). The catalysed reaction is butanoyl-CoA + H2O = butanoate + CoA + H(+). The enzyme catalyses hexanoyl-CoA + H2O = hexanoate + CoA + H(+). It catalyses the reaction tetradecanoyl-CoA + H2O = tetradecanoate + CoA + H(+). It carries out the reaction hexadecanoyl-CoA + H2O = hexadecanoate + CoA + H(+). The catalysed reaction is dodecanoyl-CoA + H2O = dodecanoate + CoA + H(+). The enzyme catalyses (9Z)-octadecenoyl-CoA + H2O = (9Z)-octadecenoate + CoA + H(+). In terms of biological role, catalyzes the hydrolysis of acyl-CoAs into free fatty acids and coenzyme A (CoASH), regulating their respective intracellular levels. Has acyl-CoA thioesterase activity towards medium (C12) and long-chain (C18) fatty acyl-CoA substrates. Can also hydrolyze 3-hydroxyphenylacetyl-CoA and 3,4-dihydroxyphenylacetyl-CoA (in vitro). May play a role in controlling adaptive thermogenesis. The sequence is that of Acyl-coenzyme A thioesterase 13 from Mus musculus (Mouse).